The chain runs to 398 residues: Aspartate aminotransferase (398 aa).

Positions 36, 132, and 185 each coordinate L-aspartate. Lys248 bears the N6-(pyridoxal phosphate)lysine mark. Arg376 contacts L-aspartate.

This sequence belongs to the class-I pyridoxal-phosphate-dependent aminotransferase family. In terms of assembly, homodimer. The cofactor is pyridoxal 5'-phosphate.

Its subcellular location is the cytoplasm. The catalysed reaction is L-aspartate + 2-oxoglutarate = oxaloacetate + L-glutamate. This chain is Aspartate aminotransferase (aspC), found in Pseudomonas aeruginosa (strain ATCC 15692 / DSM 22644 / CIP 104116 / JCM 14847 / LMG 12228 / 1C / PRS 101 / PAO1).